Consider the following 185-residue polypeptide: Ribosome-recycling factor (185 aa).

Belongs to the RRF family.

The protein resides in the cytoplasm. Responsible for the release of ribosomes from messenger RNA at the termination of protein biosynthesis. May increase the efficiency of translation by recycling ribosomes from one round of translation to another. The protein is Ribosome-recycling factor of Buchnera aphidicola subsp. Acyrthosiphon pisum (strain Tuc7).